Reading from the N-terminus, the 351-residue chain is Phospho-N-acetylmuramoyl-pentapeptide-transferase (351 aa).

The next 10 membrane-spanning stretches (helical) occupy residues 22 to 42 (ILAF…FISW), 65 to 85 (TPTM…LITT), 87 to 107 (FNKY…LGFI), 128 to 148 (FLLQ…VGFD), 158 to 178 (YPIF…IVAM), 190 to 210 (GLAT…LYIV), 225 to 245 (LGVG…LGFL), 254 to 274 (VFMG…LAIV), 279 to 299 (LLLI…ILQV), and 328 to 348 (KITI…ILSI).

This sequence belongs to the glycosyltransferase 4 family. MraY subfamily. Requires Mg(2+) as cofactor.

It localises to the cell inner membrane. The enzyme catalyses UDP-N-acetyl-alpha-D-muramoyl-L-alanyl-gamma-D-glutamyl-meso-2,6-diaminopimeloyl-D-alanyl-D-alanine + di-trans,octa-cis-undecaprenyl phosphate = di-trans,octa-cis-undecaprenyl diphospho-N-acetyl-alpha-D-muramoyl-L-alanyl-D-glutamyl-meso-2,6-diaminopimeloyl-D-alanyl-D-alanine + UMP. It functions in the pathway cell wall biogenesis; peptidoglycan biosynthesis. Catalyzes the initial step of the lipid cycle reactions in the biosynthesis of the cell wall peptidoglycan: transfers peptidoglycan precursor phospho-MurNAc-pentapeptide from UDP-MurNAc-pentapeptide onto the lipid carrier undecaprenyl phosphate, yielding undecaprenyl-pyrophosphoryl-MurNAc-pentapeptide, known as lipid I. The sequence is that of Phospho-N-acetylmuramoyl-pentapeptide-transferase from Nautilia profundicola (strain ATCC BAA-1463 / DSM 18972 / AmH).